The primary structure comprises 540 residues: tRNA-2-methylthio-N(6)-dimethylallyladenosine synthase (540 aa).

The MTTase N-terminal domain maps to 41 to 157 (RTYEVRTFGC…LPTLLERSAH (117 aa)). C50, C86, C120, C194, C198, and C201 together coordinate [4Fe-4S] cluster. Residues 180 to 416 (RESAYSGWVS…IALQERIQAE (237 aa)) enclose the Radical SAM core domain. The TRAM domain occupies 419–486 (KELVGTTQEL…PFFLIADGPL (68 aa)).

Belongs to the methylthiotransferase family. MiaB subfamily. Monomer. It depends on [4Fe-4S] cluster as a cofactor.

It localises to the cytoplasm. The enzyme catalyses N(6)-dimethylallyladenosine(37) in tRNA + (sulfur carrier)-SH + AH2 + 2 S-adenosyl-L-methionine = 2-methylsulfanyl-N(6)-dimethylallyladenosine(37) in tRNA + (sulfur carrier)-H + 5'-deoxyadenosine + L-methionine + A + S-adenosyl-L-homocysteine + 2 H(+). Its function is as follows. Catalyzes the methylthiolation of N6-(dimethylallyl)adenosine (i(6)A), leading to the formation of 2-methylthio-N6-(dimethylallyl)adenosine (ms(2)i(6)A) at position 37 in tRNAs that read codons beginning with uridine. The polypeptide is tRNA-2-methylthio-N(6)-dimethylallyladenosine synthase (Corynebacterium urealyticum (strain ATCC 43042 / DSM 7109)).